Here is a 296-residue protein sequence, read N- to C-terminus: Light-inducible protein CPRF3 (296 aa).

Disordered regions lie at residues 1–27, 98–165, and 190–223; these read MSDGEEGTPMKHPKPASSVEEAPITTT, PNLA…GSLE, and RVNDERELKRQRRKQSNRESARRSRLRKQAKSDE. The segment covering 107 to 117 has biased composition (basic and acidic residues); the sequence is VGRKISDEKGR. The segment covering 145–156 has biased composition (low complexity); sequence SSSDNDCPSLSS. Residues 196–259 enclose the bZIP domain; that stretch reads ELKRQRRKQS…AEVTSENHSI (64 aa). Positions 198–220 are basic motif; that stretch reads KRQRRKQSNRESARRSRLRKQAK. The leucine-zipper stretch occupies residues 224 to 245; the sequence is LQERLDNLSKENRILRKNLQRI.

It belongs to the bZIP family. In terms of assembly, binds DNA as a dimer.

Its subcellular location is the nucleus. Binds to the G-box-like motif (5'-ACGTGGC-3') of the chalcone synthase (CHS) gene promoter. G-box and G-box-like motifs are defined in promoters of certain plant genes which are regulated by such diverse stimuli as light-induction or hormone control. In Petroselinum crispum (Parsley), this protein is Light-inducible protein CPRF3 (CPRF3).